The primary structure comprises 122 residues: Large ribosomal subunit protein uL14c (122 aa).

It belongs to the universal ribosomal protein uL14 family. In terms of assembly, part of the 50S ribosomal subunit.

It localises to the plastid. It is found in the chloroplast. Its function is as follows. Binds to 23S rRNA. This Illicium oligandrum (Star anise) protein is Large ribosomal subunit protein uL14c.